A 155-amino-acid polypeptide reads, in one-letter code: 6,7-dimethyl-8-ribityllumazine synthase (155 aa).

5-amino-6-(D-ribitylamino)uracil contacts are provided by residues F23, 57–59 (AFE), and 81–83 (AVI). 86 to 87 (ST) contributes to the (2S)-2-hydroxy-3-oxobutyl phosphate binding site. H89 (proton donor) is an active-site residue. F114 lines the 5-amino-6-(D-ribitylamino)uracil pocket. R128 is a binding site for (2S)-2-hydroxy-3-oxobutyl phosphate.

It belongs to the DMRL synthase family.

The catalysed reaction is (2S)-2-hydroxy-3-oxobutyl phosphate + 5-amino-6-(D-ribitylamino)uracil = 6,7-dimethyl-8-(1-D-ribityl)lumazine + phosphate + 2 H2O + H(+). The protein operates within cofactor biosynthesis; riboflavin biosynthesis; riboflavin from 2-hydroxy-3-oxobutyl phosphate and 5-amino-6-(D-ribitylamino)uracil: step 1/2. Its function is as follows. Catalyzes the formation of 6,7-dimethyl-8-ribityllumazine by condensation of 5-amino-6-(D-ribitylamino)uracil with 3,4-dihydroxy-2-butanone 4-phosphate. This is the penultimate step in the biosynthesis of riboflavin. The protein is 6,7-dimethyl-8-ribityllumazine synthase of Citrifermentans bemidjiense (strain ATCC BAA-1014 / DSM 16622 / JCM 12645 / Bem) (Geobacter bemidjiensis).